A 206-amino-acid polypeptide reads, in one-letter code: Bacteriochlorophyll synthase 23 kDa chain (206 aa).

The protein operates within porphyrin-containing compound metabolism; bacteriochlorophyll biosynthesis (light-independent). The polypeptide is Bacteriochlorophyll synthase 23 kDa chain (bchJ) (Cereibacter sphaeroides (strain ATCC 17023 / DSM 158 / JCM 6121 / CCUG 31486 / LMG 2827 / NBRC 12203 / NCIMB 8253 / ATH 2.4.1.) (Rhodobacter sphaeroides)).